A 294-amino-acid chain; its full sequence is Universal stress protein MSMEG_3950/MSMEI_3859 (294 aa).

G13 is a binding site for ATP. An Isoglutamyl lysine isopeptide (Lys-Gln) (interchain with Q-Cter in protein Pup) cross-link involves residue K109. ATP contacts are provided by residues 117–123 (GNRGMGA), 131–132 (ST), G164, D197, 261–267 (GSHGRGG), and 275–277 (SVS).

Belongs to the universal stress protein A family.

The sequence is that of Universal stress protein MSMEG_3950/MSMEI_3859 from Mycolicibacterium smegmatis (strain ATCC 700084 / mc(2)155) (Mycobacterium smegmatis).